Consider the following 1882-residue polypeptide: uncharacterized protein (1882 aa).

The helical transmembrane segment at 16–36 (FFLLFGIIFVLFSIIFLETSI) threads the bilayer. Disordered stretches follow at residues 103–129 (DFGSDSEKKDSTTKSSDNNPRKGDVND), 220–306 (FPGD…ESET), 492–513 (VALAQQQQDKQESSADDGVKDP), and 658–698 (QTDE…TKST). Over residues 221–239 (PGDKGKGEDKKTTKKKSEI) the composition is skewed to basic and acidic residues. A compositionally biased stretch (polar residues) spans 240–249 (KQASSATTVL). 3 stretches are compositionally biased toward basic and acidic residues: residues 259–275 (TDAKETTNNEEPKKDSN), 284–294 (NKDKVWFKSDE), and 500–511 (DKQESSADDGVK). Residues 667–698 (AKTTQGTTDSLTQLADASSSSSSSSTGDTKST) show a composition bias toward low complexity. 4 consecutive transmembrane segments (helical) span residues 987 to 1007 (ASVVIAAFLSILALYLTILLI), 1037 to 1057 (VFAGIVALASSFFGVLFAFLL), 1080 to 1100 (WISFFGSMLLIFVIFQFISWI), and 1154 to 1174 (LFTYVGLSSIALLLIGIAGTI). Disordered regions lie at residues 1233-1253 (DQIQQQQQQQQQQGNDKEHPY) and 1572-1598 (KDGQSTDDSGGTSSGGGSCGGGSTSST). The span at 1234–1245 (QIQQQQQQQQQQ) shows a compositional bias: low complexity. Gly residues predominate over residues 1583 to 1594 (TSSGGGSCGGGS). The next 4 membrane-spanning stretches (helical) occupy residues 1759-1779 (FLLGTIIPFIFITCVVLGISM), 1807-1827 (FFIPAFVLSLLISIAILAGLL), 1828-1848 (VGVQALVFGVAQVFLTNVFEF), and 1851-1871 (YMVGIVLFGATIFVIGSYFWI).

This sequence belongs to the ABC-4 integral membrane protein family.

It is found in the cell membrane. This is an uncharacterized protein from Mycoplasma pneumoniae (strain ATCC 29342 / M129 / Subtype 1) (Mycoplasmoides pneumoniae).